A 357-amino-acid chain; its full sequence is UPF0283 membrane protein BAbS19_I09770 (357 aa).

A disordered region spans residues 1–36 (MSDKTPRKPTAFRLEQPARVSAASEQEEPRRPRAVK). Positions 27–36 (EEPRRPRAVK) are enriched in basic and acidic residues. 2 consecutive transmembrane segments (helical) span residues 78–98 (ILFG…TEDL) and 109–129 (LGWT…AIIL).

Belongs to the UPF0283 family.

Its subcellular location is the cell inner membrane. This is UPF0283 membrane protein BAbS19_I09770 from Brucella abortus (strain S19).